The sequence spans 362 residues: ATP synthase F(1) complex catalytic subunit beta, mitochondrial (362 aa).

Position 14 is an N6-acetyllysine; alternate (Lys14). Lys14 is subject to N6-succinyllysine; alternate. Lys51 is subject to N6-acetyllysine. 6 residues coordinate ADP: Val62, Val63, Gly64, Lys65, Thr66, and Val67. Val62 contributes to the ATP binding site. 5 residues coordinate phosphate: Val62, Val63, Gly64, Lys65, and Thr66. Residues Gly64, Lys65, Thr66, and Val67 each coordinate ATP. Residue Thr66 participates in Mg(2+) binding. Mg(2+) is bound at residue Glu91. Lys112 and Lys117 each carry N6-acetyllysine; alternate. N6-succinyllysine; alternate is present on residues Lys112 and Lys117. Residue Thr165 is modified to Phosphothreonine. An N6-acetyllysine modification is found at Lys279. Ser286 bears the Phosphoserine mark. An N6-acetyllysine mark is found at Lys333 and Lys338.

It belongs to the ATPase alpha/beta chains family. Homotrimer. Component of the ATP synthase complex composed at least of ATP5F1A/subunit alpha, ATP5F1B/subunit beta, ATP5MC1/subunit c (homooctomer), MT-ATP6/subunit a, MT-ATP8/subunit 8, ATP5ME/subunit e, ATP5MF/subunit f, ATP5MG/subunit g, ATP5MK/subunit k, ATP5MJ/subunit j, ATP5F1C/subunit gamma, ATP5F1D/subunit delta, ATP5F1E/subunit epsilon, ATP5PF/subunit F6, ATP5PB/subunit b, ATP5PD/subunit d, ATP5PO/subunit OSCP. ATP synthase complex consists of a soluble F(1) head domain (subunits alpha(3) and beta(3)) - the catalytic core - and a membrane F(0) domain - the membrane proton channel (subunits c, a, 8, e, f, g, k and j). These two domains are linked by a central stalk (subunits gamma, delta, and epsilon) rotating inside the F1 region and a stationary peripheral stalk (subunits F6, b, d, and OSCP). Interacts with PPIF. Interacts with BCL2L1 isoform BCL-X(L); the interaction mediates the association of BCL2L1 isoform BCL-X(L) with the mitochondrial membrane F(1)F(0) ATP synthase and enhances neurons metabolic efficiency. Interacts with CLN5 and PPT1. Interacts with S100A1; this interaction increases F1-ATPase activity. Interacts with MTLN. Interacts with TTC5/STRAP; the interaction results in decreased mitochondrial ATP production.

It localises to the mitochondrion inner membrane. The enzyme catalyses ATP + H2O + 4 H(+)(in) = ADP + phosphate + 5 H(+)(out). In terms of biological role, catalytic subunit beta, of the mitochondrial membrane ATP synthase complex (F(1)F(0) ATP synthase or Complex V) that produces ATP from ADP in the presence of a proton gradient across the membrane which is generated by electron transport complexes of the respiratory chain. ATP synthase complex consist of a soluble F(1) head domain - the catalytic core - and a membrane F(1) domain - the membrane proton channel. These two domains are linked by a central stalk rotating inside the F(1) region and a stationary peripheral stalk. During catalysis, ATP synthesis in the catalytic domain of F(1) is coupled via a rotary mechanism of the central stalk subunits to proton translocation. In vivo, can only synthesize ATP although its ATP hydrolase activity can be activated artificially in vitro. With the subunit alpha (ATP5F1A), forms the catalytic core in the F(1) domain. The polypeptide is ATP synthase F(1) complex catalytic subunit beta, mitochondrial (Mesocricetus auratus (Golden hamster)).